The primary structure comprises 556 residues: Optineurin (556 aa).

The tract at residues 1 to 33 (MSSKPQIRPAENGEHCRSKMENGMDSMAPPTLS) is disordered. Residues 11-22 (ENGEHCRSKMEN) show a composition bias toward basic and acidic residues. The stretch at 38–164 (EEMVQQMKEL…SELQVKLNIA (127 aa)) forms a coiled coil. The short motif at 168–173 (DSFVEI) is the LIR element. Residues 219 to 487 (VSQLLCCLRN…LLKEQQNLED (269 aa)) adopt a coiled-coil conformation. Residues 245–274 (ERLSKMENETSNCLESGTQTNQEEESSEAI) are disordered. Residues 253–265 (ETSNCLESGTQTN) are compositionally biased toward polar residues. The short motif at 453-458 (DFHAER) is the UBAN element. The tract at residues 496–524 (MQNRHGARAPDREHSPRLVQRGTGSQEWP) is disordered. A CCHC NOA-type zinc finger spans residues 526–556 (QRNISIYSCPKCEEILPDLDTLQIHVMDCIN). The Zn(2+) site is built by Cys-534, Cys-537, His-550, and Cys-554.

As to quaternary structure, binds to linear ubiquitin chains. Interacts with LC3 family members. As to expression, expressed in erythrocytes, skeletal muscle, heart, spleen and brain. Weakly expressed in lung and liver (at protein level).

It localises to the cytoplasm. The protein resides in the perinuclear region. Its subcellular location is the golgi apparatus. It is found in the trans-Golgi network. The protein localises to the cytoplasmic vesicle. It localises to the recycling endosome. The protein resides in the autophagosome. Functionally, probably part of the TNF-alpha signaling pathway that can shift the equilibrium toward induction of cell death. May act by regulating membrane trafficking and cellular morphogenesis. May act as autophagy receptor that interacts directly with both the cargo to become degraded and an autophagy modifier of the MAP1 LC3 family. The chain is Optineurin (OPTN) from Gallus gallus (Chicken).